The following is a 63-amino-acid chain: Conotoxin PnMRCL-0111 (63 aa).

A signal peptide spans 1–22 (MHCLSVFVILLLLTASAPSVDA). Positions 23–50 (QPKTEDDVPLSSFHDDLQRTVRTLLDIR) are excised as a propeptide. Tryptophan amide is present on Trp62.

It belongs to the conotoxin T superfamily. Contains 2 disulfide bonds that can be either 'C1-C3, C2-C4' or 'C1-C4, C2-C3', since these disulfide connectivities have been observed for conotoxins with cysteine framework V (for examples, see AC P0DQQ7 and AC P81755). In terms of tissue distribution, expressed by the venom duct.

Its subcellular location is the secreted. The sequence is that of Conotoxin PnMRCL-0111 from Conus pennaceus (Feathered cone).